The chain runs to 214 residues: Cytochrome b (214 aa).

Transmembrane regions (helical) follow at residues 31–51 (FGSMLLACLMIQTITGFFLAI), 75–96 (WIMQNTXAIGASMFFICIYIHI), 111–131 (WLSGTTLLITLMATAFFGYVL), and 176–196 (FFALHFILPFIIISLSSAHIL). X81 and H95 together coordinate heme b. Heme b contacts are provided by H180 and H194. H199 provides a ligand contact to a ubiquinone.

This sequence belongs to the cytochrome b family. As to quaternary structure, the cytochrome bc1 complex contains 3 respiratory subunits (MT-CYB, CYC1 and UQCRFS1), 2 core proteins (UQCRC1 and UQCRC2) and probably 6 low-molecular weight proteins. Heme b is required as a cofactor.

Its subcellular location is the mitochondrion inner membrane. Component of the ubiquinol-cytochrome c reductase complex (complex III or cytochrome b-c1 complex) that is part of the mitochondrial respiratory chain. The b-c1 complex mediates electron transfer from ubiquinol to cytochrome c. Contributes to the generation of a proton gradient across the mitochondrial membrane that is then used for ATP synthesis. The sequence is that of Cytochrome b (MT-CYB) from Bothriechis schlegelii (Eyelash palm pitviper).